The chain runs to 730 residues: Dual function macrocyclase-peptidase POPB (730 aa).

The tract at residues 1-34 (MSSVTWAPGNYPSTRRSDHVDTYQSASKGEVPVP) is disordered. Residues Ser577, Asp661, and His698 each act as charge relay system in the active site.

Belongs to the peptidase S9A family. Monomer.

The enzyme catalyses Hydrolysis of Pro-|-Xaa &gt;&gt; Ala-|-Xaa in oligopeptides.. Its function is as follows. Dual function macrocyclase-peptidase involved in the biosynthesis of the highly toxic amanitin toxin family of macrocycles. Cleaves peptide bonds on the C-terminal side of prolyl residues. The enzyme first removes 10 residues from the N-terminus of a 35-residue substrate. Conformational trapping of the 25 amino-acid peptide forces the enzyme to release this intermediate rather than proceed to macrocyclization. The enzyme rebinds the 25 amino-acid peptide in a different conformation and catalyzes macrocyclization of the N-terminal eight residues. This chain is Dual function macrocyclase-peptidase POPB, found in Galerina marginata (strain CBS 339.88).